Consider the following 240-residue polypeptide: tRNA1(Val) (adenine(37)-N6)-methyltransferase (240 aa).

Belongs to the methyltransferase superfamily. tRNA (adenine-N(6)-)-methyltransferase family.

It is found in the cytoplasm. The enzyme catalyses adenosine(37) in tRNA1(Val) + S-adenosyl-L-methionine = N(6)-methyladenosine(37) in tRNA1(Val) + S-adenosyl-L-homocysteine + H(+). Functionally, specifically methylates the adenine in position 37 of tRNA(1)(Val) (anticodon cmo5UAC). In Photobacterium profundum (strain SS9), this protein is tRNA1(Val) (adenine(37)-N6)-methyltransferase.